We begin with the raw amino-acid sequence, 65 residues long: Large ribosomal subunit protein bL35 (65 aa).

It belongs to the bacterial ribosomal protein bL35 family.

The chain is Large ribosomal subunit protein bL35 from Oleidesulfovibrio alaskensis (strain ATCC BAA-1058 / DSM 17464 / G20) (Desulfovibrio alaskensis).